The sequence spans 157 residues: Protein FAM218A (157 aa).

The segment at 104–127 (PAVTPPKLPGHSKSEGPPGKVRKR) is disordered.

In Homo sapiens (Human), this protein is Protein FAM218A (FAM218A).